A 31-amino-acid polypeptide reads, in one-letter code: Sarcolipin (31 aa).

At 1–7 (MGINTRE) the chain is on the cytoplasmic side. Residues 8–26 (LFLNFTIVLITVILMWLLV) form a helical membrane-spanning segment. The Lumenal portion of the chain corresponds to 27-31 (RSYQY).

Belongs to the sarcolipin family. Homooligomer. Can also form heterooligomers with other sarcoplasmic/endoplasmic reticulum calcium ATPase (SERCA) regulators ARLN, ERLN, PLN and STRIT1/DWORF. Monomer. Interacts with calcium ATPase ATP2A1/SERCA1. Interacts as a monomer with ATP2A2/SERCA2; the interaction decreases ATP2A2 Ca(2+) affinity. Interacts with VMP1; VMP1 competes with PLN and SLN to prevent them from forming an inhibitory complex with ATP2A2.

It is found in the sarcoplasmic reticulum membrane. Its subcellular location is the endoplasmic reticulum membrane. In terms of biological role, reversibly inhibits the activity of ATP2A1/SERCA1 and ATP2A2/SERCA2 in sarcoplasmic reticulum by decreasing the apparent affinity of the ATPase for Ca(2+). Also inhibits the activity of ATP2A3/SERCA3. Modulates calcium re-uptake during muscle relaxation and plays an important role in calcium homeostasis in muscle. Required for muscle-based, non-shivering thermogenesis. The sequence is that of Sarcolipin from Homo sapiens (Human).